Reading from the N-terminus, the 137-residue chain is Nucleoside diphosphate kinase (137 aa).

The ATP site is built by Lys-9, Phe-57, Arg-85, Thr-91, Arg-102, and Asn-112. His-115 serves as the catalytic Pros-phosphohistidine intermediate.

This sequence belongs to the NDK family. In terms of assembly, homotetramer. Mg(2+) serves as cofactor.

It localises to the cytoplasm. The catalysed reaction is a 2'-deoxyribonucleoside 5'-diphosphate + ATP = a 2'-deoxyribonucleoside 5'-triphosphate + ADP. The enzyme catalyses a ribonucleoside 5'-diphosphate + ATP = a ribonucleoside 5'-triphosphate + ADP. Its function is as follows. Major role in the synthesis of nucleoside triphosphates other than ATP. The ATP gamma phosphate is transferred to the NDP beta phosphate via a ping-pong mechanism, using a phosphorylated active-site intermediate. The chain is Nucleoside diphosphate kinase from Syntrophotalea carbinolica (strain DSM 2380 / NBRC 103641 / GraBd1) (Pelobacter carbinolicus).